Here is a 369-residue protein sequence, read N- to C-terminus: Aminomethyltransferase (369 aa).

The protein belongs to the GcvT family. In terms of assembly, the glycine cleavage system is composed of four proteins: P, T, L and H.

It carries out the reaction N(6)-[(R)-S(8)-aminomethyldihydrolipoyl]-L-lysyl-[protein] + (6S)-5,6,7,8-tetrahydrofolate = N(6)-[(R)-dihydrolipoyl]-L-lysyl-[protein] + (6R)-5,10-methylene-5,6,7,8-tetrahydrofolate + NH4(+). Its function is as follows. The glycine cleavage system catalyzes the degradation of glycine. The chain is Aminomethyltransferase from Xanthomonas oryzae pv. oryzae (strain MAFF 311018).